Reading from the N-terminus, the 58-residue chain is Large ribosomal subunit protein uL30 (58 aa).

It belongs to the universal ribosomal protein uL30 family. As to quaternary structure, part of the 50S ribosomal subunit.

The sequence is that of Large ribosomal subunit protein uL30 from Acinetobacter baumannii (strain AB307-0294).